The chain runs to 400 residues: Clotting factor B (400 aa).

The first 23 residues, methionine 1–arginine 23, serve as a signal peptide directing secretion. Residues glutamate 36–cysteine 80 enclose the Clip domain. 3 disulfides stabilise this stretch: cysteine 37–cysteine 79, cysteine 47–cysteine 68, and cysteine 53–cysteine 80. The propeptide at leucine 104–valine 124 is activation peptide. N-linked (GlcNAc...) asparagine glycosylation is present at asparagine 140. A Peptidase S1 domain is found at isoleucine 148–asparagine 392. Residues histidine 192 and aspartate 240 each act as charge relay system in the active site. A glycan (N-linked (GlcNAc...) asparagine) is linked at asparagine 251. 2 disulfides stabilise this stretch: cysteine 307-cysteine 329 and cysteine 340-cysteine 368. Catalysis depends on serine 344, which acts as the Charge relay system. Asparagine 352 carries N-linked (GlcNAc...) asparagine glycosylation.

It belongs to the peptidase S1 family. CLIP subfamily. As to quaternary structure, upon activation by factor C, it is converted to a two-chain active form composed of a light and a heavy chain linked by a disulfide bond.

Its subcellular location is the secreted. The catalysed reaction is Selective cleavage of 98-Arg-|-Ile-99 bond in Limulus proclotting enzyme to form active clotting enzyme.. Its activity is regulated as follows. Strongly inhibited by alpha2-plasmin inhibitor and DFP. Partially inhibited by benzamidine, leupeptin and PCMB. This enzyme is closely associated with an endotoxin-sensitive hemolymph coagulation system which may play important roles in both hemostasis and host defense mechanisms. Its active form catalyzes the activation of proclotting enzyme. Does not activate the mammalian coagulation factors factor IX, factor X, prothrombin, plasminogen, protein C or prekallikrein. Does not hydrolyze fibrinogen. Does not catalyze the activation of factor C or coagulogen. The polypeptide is Clotting factor B (Tachypleus tridentatus (Japanese horseshoe crab)).